The primary structure comprises 305 residues: UDP-3-O-acyl-N-acetylglucosamine deacetylase (305 aa).

His-79, His-238, and Asp-242 together coordinate Zn(2+). Catalysis depends on His-265, which acts as the Proton donor.

It belongs to the LpxC family. It depends on Zn(2+) as a cofactor.

It catalyses the reaction a UDP-3-O-[(3R)-3-hydroxyacyl]-N-acetyl-alpha-D-glucosamine + H2O = a UDP-3-O-[(3R)-3-hydroxyacyl]-alpha-D-glucosamine + acetate. It participates in glycolipid biosynthesis; lipid IV(A) biosynthesis; lipid IV(A) from (3R)-3-hydroxytetradecanoyl-[acyl-carrier-protein] and UDP-N-acetyl-alpha-D-glucosamine: step 2/6. Its function is as follows. Catalyzes the hydrolysis of UDP-3-O-myristoyl-N-acetylglucosamine to form UDP-3-O-myristoylglucosamine and acetate, the committed step in lipid A biosynthesis. The protein is UDP-3-O-acyl-N-acetylglucosamine deacetylase of Histophilus somni (strain 129Pt) (Haemophilus somnus).